We begin with the raw amino-acid sequence, 655 residues long: Protein npp-24 (655 aa).

Residues 263-283 (ICSVFVLVSGGGVLSHLVVFP) traverse the membrane as a helical segment.

Its subcellular location is the membrane. In Caenorhabditis elegans, this protein is Protein npp-24.